The following is a 367-amino-acid chain: Protein pxr1 (367 aa).

Disordered regions lie at residues 1–28 (MGLS…TDSF) and 156–336 (KALK…PMGI). The segment covering 15–27 (DPNNTKWSGNTDS) has biased composition (polar residues). The G-patch domain occupies 25 to 79 (TDSFGHRMMKSQGWTPGEYLGAKDAAHAEFHTAANASHIRVVIKDNNLGLGAKIG). Positions 167–182 (SSDDSDSSSDEEEEEK) are enriched in acidic residues. Basic residues-rich tracts occupy residues 209–221 (SKKS…SKKR), 236–248 (KSKK…KSKS), and 265–277 (KARK…KKRR). The span at 282-296 (ATAGADTEETSSTSK) shows a compositional bias: low complexity. Positions 297–309 (SSKKNSKKDKHKS) are enriched in basic residues. A compositionally biased stretch (low complexity) spans 310–328 (SSASESSTKESTPTVTESS).

Belongs to the PINX1 family.

It is found in the nucleus. The protein localises to the nucleolus. Its function is as follows. Involved in rRNA-processing at A0, A1 and A2 sites and negatively regulates telomerase. This chain is Protein pxr1 (pxr1), found in Sclerotinia sclerotiorum (strain ATCC 18683 / 1980 / Ss-1) (White mold).